The chain runs to 314 residues: MSSVIFLGTPNFGSVVLQGLIEQGYEIKAVVTQPDKRVGRKQVVHQSAVKETALKHNLPVYQPAKLSGSEELAELMKIEPDFIITAAYGQFLPTKFLKSAKVAPVNVHGSLLPKYRGGAPIQYSVLNGDKETGVTIMEMVKKMDAGDIFAQKALPITDEDTSGTLFDKLSILGRDLLLETLPKFIDGTVTRTAQDEDKVVFSPNISKDQEKINLSMTAKEANNLIRALNPDPGAYFMLGGKRFKVWKAKPLTEKTSFPAGTLVTNKKKFVISMADGSQLELLEVQPTGKKKMNIKDYLNGQGSHFTIGDKIIDE.

Position 110 to 113 (110 to 113 (SLLP)) interacts with (6S)-5,6,7,8-tetrahydrofolate.

Belongs to the Fmt family.

The enzyme catalyses L-methionyl-tRNA(fMet) + (6R)-10-formyltetrahydrofolate = N-formyl-L-methionyl-tRNA(fMet) + (6S)-5,6,7,8-tetrahydrofolate + H(+). Its function is as follows. Attaches a formyl group to the free amino group of methionyl-tRNA(fMet). The formyl group appears to play a dual role in the initiator identity of N-formylmethionyl-tRNA by promoting its recognition by IF2 and preventing the misappropriation of this tRNA by the elongation apparatus. The protein is Methionyl-tRNA formyltransferase of Lactobacillus johnsonii (strain CNCM I-12250 / La1 / NCC 533).